We begin with the raw amino-acid sequence, 938 residues long: Probable glutamyl endopeptidase, chloroplastic (938 aa).

The N-terminal 54 residues, M1–V54, are a transit peptide targeting the chloroplast. Low complexity predominate over residues G58–G76. The segment at G58–L77 is disordered. Active-site charge relay system residues include S762, D836, and H870. The segment covering S897–V913 has biased composition (polar residues). The disordered stretch occupies residues S897 to L938.

This sequence belongs to the peptidase S9D family.

The protein localises to the plastid. The protein resides in the chloroplast stroma. Functionally, serine-type protease active in vitro against the LHCII N-terminal. Cleaves its substrate on the carboxy-side of Glu residues. This chain is Probable glutamyl endopeptidase, chloroplastic (GEP), found in Oryza sativa subsp. japonica (Rice).